Reading from the N-terminus, the 443-residue chain is MYLPQEIIRRKRDNKVLTTEEINFFIQGVAKNTVSEGQIAAFAMAVYFNEMTMPERIALTCAMRDSGMVIDWSHMNFDGPIVDKHSTGGVGDVTSLMLGPMVAACGGYVPMISGRGLGHTGGTLDKLESIAGYNIMPNNDLFGKVTKEAGVAIIGQTGDLAPADKRVYATRDVTATVDNISLITASILSKKLAAGLDSLVMDVKVGSGAFMPTYEASEELAKSIVAVANGAGTKTTALLTDMNQVLASTAGNALEVREAIRFLTGEYRNPRLYEVAMALCAEMLVIANLAKDEQEACIKLQAVLDNGKAAECFGKMVFGLGGPNDIIENYDNHLETAQIIKPVFADKSGFVNTMDTRDLGMAVVGMGGGRRVASDTIDYAVGLSDMIRLGQTVDSNQPLAMIHARNEDQWQQAADAVKAAIVISEEQPEATPEVYRKVRSQDV.

Belongs to the thymidine/pyrimidine-nucleoside phosphorylase family. In terms of assembly, homodimer.

The catalysed reaction is thymidine + phosphate = 2-deoxy-alpha-D-ribose 1-phosphate + thymine. Its pathway is pyrimidine metabolism; dTMP biosynthesis via salvage pathway; dTMP from thymine: step 1/2. Functionally, the enzymes which catalyze the reversible phosphorolysis of pyrimidine nucleosides are involved in the degradation of these compounds and in their utilization as carbon and energy sources, or in the rescue of pyrimidine bases for nucleotide synthesis. This chain is Thymidine phosphorylase, found in Aliivibrio salmonicida (strain LFI1238) (Vibrio salmonicida (strain LFI1238)).